Consider the following 336-residue polypeptide: MATLHAPAFELPEILNTKTNLADARIGAQVIECSDDFFAEAKRMLQFEAPIFVEDKFDDHGKWMDGWESRRKRHAGYDWCIVKLGVSGKISALDIDTTFFTGNYPASASLEACYAPNGDLTGVTWQSILENTELGPSQHHIFMVNNDAIFTHIRLNIFPDGGIARLRVYGDVHIQVTDHEQTLDLLALENGGRVIAYSDAHFGHPRNLINPGRGVNMGDGWETKRRRAPGYDWCILALGKSGKIEKIEIDTAHFKGNFPAEVSIQAVYLENATDAQLIPQSMFWSYLLEAQPMQMDHIHEYMNEILQHEKVSHIRINMIPDGGISRVRLWGKIAKS.

The protein belongs to the allantoicase family.

The catalysed reaction is allantoate + H2O = (S)-ureidoglycolate + urea. Its pathway is nitrogen metabolism; (S)-allantoin degradation; (S)-ureidoglycolate from allantoate (aminidohydrolase route): step 1/1. The polypeptide is Probable allantoicase (Acinetobacter baumannii (strain ACICU)).